Here is a 310-residue protein sequence, read N- to C-terminus: Tryptophan 2,3-dioxygenase (310 aa).

The disordered stretch occupies residues 1–36; sequence MQPPGEDAPAGCPFSGARAAHSAPAAPAAHEASHVP. Residues 15–36 are compositionally biased toward low complexity; that stretch reads SGARAAHSAPAAPAAHEASHVP. Substrate contacts are provided by residues 79 to 83, Y141, and R145; that span reads FIIQH. A heme-binding site is contributed by H268. T282 is a binding site for substrate.

It belongs to the tryptophan 2,3-dioxygenase family. In terms of assembly, homotetramer. Requires heme as cofactor.

It carries out the reaction L-tryptophan + O2 = N-formyl-L-kynurenine. It participates in amino-acid degradation; L-tryptophan degradation via kynurenine pathway; L-kynurenine from L-tryptophan: step 1/2. Heme-dependent dioxygenase that catalyzes the oxidative cleavage of the L-tryptophan (L-Trp) pyrrole ring and converts L-tryptophan to N-formyl-L-kynurenine. Catalyzes the oxidative cleavage of the indole moiety. This chain is Tryptophan 2,3-dioxygenase, found in Burkholderia lata (strain ATCC 17760 / DSM 23089 / LMG 22485 / NCIMB 9086 / R18194 / 383).